The sequence spans 251 residues: tRNA (guanine-N(1)-)-methyltransferase (251 aa).

S-adenosyl-L-methionine is bound by residues G113 and 133 to 138 (IGDYVL).

The protein belongs to the RNA methyltransferase TrmD family. Homodimer.

It is found in the cytoplasm. The catalysed reaction is guanosine(37) in tRNA + S-adenosyl-L-methionine = N(1)-methylguanosine(37) in tRNA + S-adenosyl-L-homocysteine + H(+). Specifically methylates guanosine-37 in various tRNAs. The chain is tRNA (guanine-N(1)-)-methyltransferase from Methylococcus capsulatus (strain ATCC 33009 / NCIMB 11132 / Bath).